The primary structure comprises 226 residues: Phosphoheptose isomerase (226 aa).

Residues 50–212 (IAGVFETGGK…ERMMGYGTEC (163 aa)) form the SIS domain. 65–67 (NGG) provides a ligand contact to substrate. Zn(2+) contacts are provided by His-74 and Glu-78. Substrate contacts are provided by residues Glu-78, 109–110 (ND), 135–137 (STS), Ser-140, and Gln-188. Positions 188 and 196 each coordinate Zn(2+).

The protein belongs to the SIS family. GmhA subfamily. It depends on Zn(2+) as a cofactor.

The protein localises to the cytoplasm. It catalyses the reaction 2 D-sedoheptulose 7-phosphate = D-glycero-alpha-D-manno-heptose 7-phosphate + D-glycero-beta-D-manno-heptose 7-phosphate. It participates in carbohydrate biosynthesis; D-glycero-D-manno-heptose 7-phosphate biosynthesis; D-glycero-alpha-D-manno-heptose 7-phosphate and D-glycero-beta-D-manno-heptose 7-phosphate from sedoheptulose 7-phosphate: step 1/1. Its function is as follows. Catalyzes the isomerization of sedoheptulose 7-phosphate in D-glycero-D-manno-heptose 7-phosphate. This Chlorobium phaeobacteroides (strain DSM 266 / SMG 266 / 2430) protein is Phosphoheptose isomerase.